Here is a 273-residue protein sequence, read N- to C-terminus: Undecaprenyl-diphosphatase (273 aa).

The next 6 membrane-spanning stretches (helical) occupy residues isoleucine 43–tyrosine 63, lysine 82–isoleucine 102, leucine 109–alanine 129, threonine 185–leucine 205, alanine 214–valine 234, and phenylalanine 249–isoleucine 269.

It belongs to the UppP family.

The protein localises to the cell inner membrane. The enzyme catalyses di-trans,octa-cis-undecaprenyl diphosphate + H2O = di-trans,octa-cis-undecaprenyl phosphate + phosphate + H(+). Functionally, catalyzes the dephosphorylation of undecaprenyl diphosphate (UPP). Confers resistance to bacitracin. The polypeptide is Undecaprenyl-diphosphatase (Laribacter hongkongensis (strain HLHK9)).